Here is a 797-residue protein sequence, read N- to C-terminus: N-acetylneuraminate (7)9-O-acetyltransferase (797 aa).

Residues 1–18 lie on the Cytoplasmic side of the membrane; that stretch reads MAALAYNLGKREINHYFS. A helical membrane pass occupies residues 19-39; the sequence is VRSAKVLALVAVLLLAACHLA. Topologically, residues 40–313 are lumenal; sequence SRRYRGNDSC…QPRPPVTLIQ (274 aa). An N-linked (GlcNAc...) asparagine glycan is attached at N46. The Acyl-ester intermediate role is filled by S94. N-linked (GlcNAc...) asparagine glycosylation is found at N175 and N187. Residues D270 and H273 contribute to the active site. A helical membrane pass occupies residues 314–334; sequence KLAACFFTLSIIGYLIFYIIH. At 335–363 the chain is on the cytoplasmic side; that stretch reads RNAHRKNKPCTDLESGEEKKNIINTPVSS. Residues 364-384 form a helical membrane-spanning segment; sequence LEILLQSFCKLGLIMAYFYMC. Topologically, residues 385-395 are lumenal; that stretch reads DRANLFMKENK. A helical membrane pass occupies residues 396–416; it reads FYTHSSFFIPIIYILVLGVFY. The Cytoplasmic portion of the chain corresponds to 417 to 439; it reads NENTKETKVLNREQTDEWKGWMQ. Residues 440–460 traverse the membrane as a helical segment; sequence LVILIYHISGASTFLPVYMHI. Residue R461 is a topological domain, lumenal. Residues 462 to 482 form a helical membrane-spanning segment; sequence VLVAAYLFQTGYGHFSYFWIK. Residues 483–486 are Cytoplasmic-facing; sequence GDFG. Residues 487-507 form a helical membrane-spanning segment; it reads IYRVCQVLFRLNFLVVVLCIV. The Lumenal portion of the chain corresponds to 508-513; it reads MDRPYQ. The chain crosses the membrane as a helical span at residues 514–534; that stretch reads FYYFVPLVTVWFMVIYVTLAL. Residues 535–547 are Cytoplasmic-facing; that stretch reads WPQIIQKKANGNC. A helical transmembrane segment spans residues 548 to 568; that stretch reads FWHFGLLLKLGFLLLFICFLA. Over 569–605 the chain is Lumenal; that stretch reads YSQGAFEKIFSLWPLSKCFELKGNVYEWWFRWRLDRY. The helical transmembrane segment at 606 to 626 threads the bilayer; sequence VVFHGMLFAFIYLALQKRQIL. The Cytoplasmic portion of the chain corresponds to 627 to 638; it reads SEGKGEPLFSNK. The chain crosses the membrane as a helical span at residues 639-659; that stretch reads ISNFLLFISVVSFLTYSIWAS. Topologically, residues 660-671 are lumenal; it reads SCKNKAECNELH. A helical membrane pass occupies residues 672–692; that stretch reads PSVSVVQILAFILIRNIPGYA. Over 693–698 the chain is Cytoplasmic; the sequence is RSVYSS. Residues 699–719 form a helical membrane-spanning segment; that stretch reads FFAWFGKISLELFICQYHIWL. Over 720–725 the chain is Lumenal; the sequence is AADTRG. Residues 726–746 form a helical membrane-spanning segment; it reads ILVLIPGNPMLNIIVSTFIFV. At 747 to 770 the chain is on the cytoplasmic side; that stretch reads CVAHEISQITNDLAQIIIPKDNSS. A helical membrane pass occupies residues 771-791; that stretch reads LLKRLACIAAFFCGLLILSSI. Residues 792–797 lie on the Lumenal side of the membrane; sequence QDKSKH.

The protein belongs to the PC-esterase family. CASD1 subfamily. N-glycosylated. In terms of tissue distribution, highly expressed in peripheral B lymphocytes.

It is found in the golgi apparatus membrane. The catalysed reaction is CMP-N-acetyl-beta-neuraminate + acetyl-CoA = CMP-N-acetyl-9-O-acetyl-beta-neuraminate + CoA. It carries out the reaction a ganglioside GD3 (d18:1(4E)) + acetyl-CoA = a ganglioside Ac-O-7-GD3(d18:1(4E)) + CoA. It catalyses the reaction CMP-N-acetyl-beta-neuraminate + acetyl-CoA = CMP-N-acetyl-7-O-acetyl-beta-neuraminate + CoA. Key enzyme in the biosynthesis of O-acetylated (O-Ac) sialoglycans such as gangliosides O-AcGD3 and O-AcGD2, which affect various processes such as cell-cell interactions, host-pathogen recognition. Catalyzes the transfer of an acetyl group from a donor, the acetyl-coenzyme-A molecule (acetyl-CoA), to the C7/8/9 OH-position of a sialic acid residue. The primary site of O-acetyl group transfer on sialic acid seems to depend on cell type and can be C7, from which the O-acetyl group could subsequently migrate to the C8 and then to the C9 position, or at C9 with possibility of migrating to the C8 and then to the C7 position. Together with ST8SIA1 (GD3 synthase) it increases the levels of ganglioside Ac-O-7-GD3. Can transfer the acetyl group from acetyl-CoA to free sialate (N-acetylneuraminate, Neu5Ac) in vitro, but has preferred substrate specificity for CMP-activated sialate (CMP-Neu5Ac), resulting in the formation of 9-O-acetylated CMP-Neu5Ac (CMP-Neu5,9Ac2). CMP-Neu5,9Ac2 may be used by sialyltransferases as a sialate donor for glycoconjugate acceptors such as ganglioside GD3. O-acetylation at position C9 of ganglioside GD3 can counteract the pro-apoptotic effects of the ganglioside GD3 in tumor cells. This chain is N-acetylneuraminate (7)9-O-acetyltransferase, found in Homo sapiens (Human).